We begin with the raw amino-acid sequence, 172 residues long: Small ribosomal subunit protein uS5 (172 aa).

The 64-residue stretch at 16 to 79 (LKDRLVAINR…EAAKKNLIRV (64 aa)) folds into the S5 DRBM domain.

It belongs to the universal ribosomal protein uS5 family. In terms of assembly, part of the 30S ribosomal subunit. Contacts proteins S4 and S8.

With S4 and S12 plays an important role in translational accuracy. Its function is as follows. Located at the back of the 30S subunit body where it stabilizes the conformation of the head with respect to the body. This is Small ribosomal subunit protein uS5 from Porphyromonas gingivalis (strain ATCC BAA-308 / W83).